The following is a 437-amino-acid chain: Adenylosuccinate synthetase (437 aa).

GTP contacts are provided by residues 12-18 (GDEGKGK) and 40-42 (GHT). Aspartate 13 serves as the catalytic Proton acceptor. Mg(2+)-binding residues include aspartate 13 and glycine 40. IMP contacts are provided by residues 13 to 16 (DEGK), 38 to 41 (NAGH), threonine 128, arginine 142, glutamine 223, threonine 238, and arginine 302. Histidine 41 (proton donor) is an active-site residue. Position 298–304 (298–304 (TTTGRRR)) interacts with substrate. GTP contacts are provided by residues arginine 304, 330-332 (KLD), and 412-414 (SLG).

This sequence belongs to the adenylosuccinate synthetase family. As to quaternary structure, homodimer. Mg(2+) is required as a cofactor.

It is found in the cytoplasm. It carries out the reaction IMP + L-aspartate + GTP = N(6)-(1,2-dicarboxyethyl)-AMP + GDP + phosphate + 2 H(+). Its pathway is purine metabolism; AMP biosynthesis via de novo pathway; AMP from IMP: step 1/2. Functionally, plays an important role in the de novo pathway of purine nucleotide biosynthesis. Catalyzes the first committed step in the biosynthesis of AMP from IMP. The sequence is that of Adenylosuccinate synthetase from Prochlorococcus marinus (strain MIT 9313).